We begin with the raw amino-acid sequence, 443 residues long: Aspartic protease PEP3 (443 aa).

Residues 1–36 form the signal peptide; that stretch reads MQNRPRVFDSAMNLSPNMHFLSLMPGLLLLSLQVHT. The propeptide at 37–107 is activation peptide; the sequence is SPTPLKKTIR…NTVSKAMQAN (71 aa). The region spanning 123–440 is the Peptidase A1 domain; the sequence is YLSPVTIGGQ…DLRGPSLHVA (318 aa). Residue D139 is part of the active site. 2 N-linked (GlcNAc...) asparagine glycosylation sites follow: N180 and N293. Residue D327 is part of the active site. Residues C363 and C403 are joined by a disulfide bond. 2 N-linked (GlcNAc...) asparagine glycosylation sites follow: N364 and N388.

Belongs to the peptidase A1 family. Monomer.

It localises to the secreted. Secreted aspartic endopeptidase that allows assimilation of proteinaceous substrates. The scissile peptide bond is attacked by a nucleophilic water molecule activated by two aspartic residues in the active site. Shows a broad primary substrate specificity. Favors hydrophobic residues at the P1 and P1' positions. The chain is Aspartic protease PEP3 from Coccidioides posadasii (strain C735) (Valley fever fungus).